The following is a 201-amino-acid chain: Glycerol-3-phosphate acyltransferase (201 aa).

A run of 5 helical transmembrane segments spans residues methionine 10–leucine 30, leucine 60–alanine 80, alanine 86–phenylalanine 106, leucine 116–valine 136, and alanine 166–isoleucine 186.

Belongs to the PlsY family. Probably interacts with PlsX.

The protein resides in the cell inner membrane. It carries out the reaction an acyl phosphate + sn-glycerol 3-phosphate = a 1-acyl-sn-glycero-3-phosphate + phosphate. It functions in the pathway lipid metabolism; phospholipid metabolism. Its function is as follows. Catalyzes the transfer of an acyl group from acyl-phosphate (acyl-PO(4)) to glycerol-3-phosphate (G3P) to form lysophosphatidic acid (LPA). This enzyme utilizes acyl-phosphate as fatty acyl donor, but not acyl-CoA or acyl-ACP. The protein is Glycerol-3-phosphate acyltransferase of Brucella melitensis biotype 2 (strain ATCC 23457).